The following is a 289-amino-acid chain: ATP synthase gamma chain (289 aa).

Belongs to the ATPase gamma chain family. As to quaternary structure, F-type ATPases have 2 components, CF(1) - the catalytic core - and CF(0) - the membrane proton channel. CF(1) has five subunits: alpha(3), beta(3), gamma(1), delta(1), epsilon(1). CF(0) has three main subunits: a, b and c.

It localises to the cell inner membrane. In terms of biological role, produces ATP from ADP in the presence of a proton gradient across the membrane. The gamma chain is believed to be important in regulating ATPase activity and the flow of protons through the CF(0) complex. This Nitrosococcus oceani (strain ATCC 19707 / BCRC 17464 / JCM 30415 / NCIMB 11848 / C-107) protein is ATP synthase gamma chain.